Reading from the N-terminus, the 322-residue chain is uncharacterized protein (322 aa).

The interval L174–R207 is disordered. Over residues V184 to P195 the composition is skewed to polar residues.

Its subcellular location is the mitochondrion. This is an uncharacterized protein from Marchantia polymorpha (Common liverwort).